The sequence spans 177 residues: Large ribosomal subunit protein uL6 (177 aa).

Belongs to the universal ribosomal protein uL6 family. As to quaternary structure, part of the 50S ribosomal subunit.

Its function is as follows. This protein binds to the 23S rRNA, and is important in its secondary structure. It is located near the subunit interface in the base of the L7/L12 stalk, and near the tRNA binding site of the peptidyltransferase center. This chain is Large ribosomal subunit protein uL6, found in Erwinia tasmaniensis (strain DSM 17950 / CFBP 7177 / CIP 109463 / NCPPB 4357 / Et1/99).